A 252-amino-acid polypeptide reads, in one-letter code: Triosephosphate isomerase (252 aa).

Position 9–11 (9–11) interacts with substrate; sequence NWK. The active-site Electrophile is the histidine 98. Glutamate 170 (proton acceptor) is an active-site residue. Substrate-binding residues include glycine 176 and serine 215.

This sequence belongs to the triosephosphate isomerase family. Homodimer.

Its subcellular location is the cytoplasm. The catalysed reaction is D-glyceraldehyde 3-phosphate = dihydroxyacetone phosphate. It participates in carbohydrate biosynthesis; gluconeogenesis. It functions in the pathway carbohydrate degradation; glycolysis; D-glyceraldehyde 3-phosphate from glycerone phosphate: step 1/1. Involved in the gluconeogenesis. Catalyzes stereospecifically the conversion of dihydroxyacetone phosphate (DHAP) to D-glyceraldehyde-3-phosphate (G3P). In Buchnera aphidicola subsp. Baizongia pistaciae (strain Bp), this protein is Triosephosphate isomerase.